Consider the following 222-residue polypeptide: Superoxide dismutase [Mn], mitochondrial (222 aa).

A mitochondrion-targeting transit peptide spans 1-24 (MLSRAACSTSRRLVPALSVLGSRQ). Residue His50 participates in Mn(2+) binding. At Tyr58 the chain carries 3'-nitrotyrosine. 2 positions are modified to N6-acetyllysine; alternate: Lys68 and Lys75. 2 positions are modified to N6-succinyllysine; alternate: Lys68 and Lys75. His98 provides a ligand contact to Mn(2+). 2 positions are modified to N6-acetyllysine; alternate: Lys122 and Lys130. Lys122 and Lys130 each carry N6-succinyllysine; alternate. 2 residues coordinate Mn(2+): Asp183 and His187. Position 202 is an N6-acetyllysine (Lys202).

This sequence belongs to the iron/manganese superoxide dismutase family. Homotetramer. The cofactor is Mn(2+). Nitrated under oxidative stress. Nitration coupled with oxidation inhibits the catalytic activity. Post-translationally, acetylation at Lys-122 decreases enzymatic activity. Deacetylated by SIRT3 upon exposure to ionizing radiations or after long fasting. In terms of processing, polyubiquitinated; leading to proteasomal degradation. Deubiquitinated by USP36 which increases protein stability.

It is found in the mitochondrion matrix. The catalysed reaction is 2 superoxide + 2 H(+) = H2O2 + O2. Destroys superoxide anion radicals which are normally produced within the cells and which are toxic to biological systems. This is Superoxide dismutase [Mn], mitochondrial (SOD2) from Bos taurus (Bovine).